The chain runs to 594 residues: Aspartate--tRNA(Asp/Asn) ligase (594 aa).

E173 is an L-aspartate binding site. Residues 197–200 form an aspartate region; it reads QLFK. Position 219 (R219) interacts with L-aspartate. ATP-binding positions include 219–221 and Q228; that span reads RDE. Position 449 (H449) interacts with L-aspartate. E482 provides a ligand contact to ATP. R489 is an L-aspartate binding site. 534–537 contributes to the ATP binding site; the sequence is GLDR.

The protein belongs to the class-II aminoacyl-tRNA synthetase family. Type 1 subfamily. As to quaternary structure, homodimer.

The protein localises to the cytoplasm. The catalysed reaction is tRNA(Asx) + L-aspartate + ATP = L-aspartyl-tRNA(Asx) + AMP + diphosphate. In terms of biological role, aspartyl-tRNA synthetase with relaxed tRNA specificity since it is able to aspartylate not only its cognate tRNA(Asp) but also tRNA(Asn). Reaction proceeds in two steps: L-aspartate is first activated by ATP to form Asp-AMP and then transferred to the acceptor end of tRNA(Asp/Asn). This chain is Aspartate--tRNA(Asp/Asn) ligase, found in Saccharophagus degradans (strain 2-40 / ATCC 43961 / DSM 17024).